A 53-amino-acid chain; its full sequence is Large ribosomal subunit protein bL32c (53 aa).

It belongs to the bacterial ribosomal protein bL32 family.

The protein resides in the plastid. It is found in the chloroplast. The protein is Large ribosomal subunit protein bL32c of Coffea arabica (Arabian coffee).